Reading from the N-terminus, the 536-residue chain is MASKQIMFDENARKALLNGVDKVANTVKITLGPKGRYVVLDKSTKPVVTNDGVTIAKEIELHDKFENMGAKLVKEVASKTQDNTGDGTTTATLLAQSMIREGLKNISAGANPIDVKKGIEMATENVVGYLKSKSSEVKGKEKIVQVATVSANNDEEIGNLIADAMERVGYNGVITVEDSKTMETNLDVVEGMQFDRGFVSPYMATDSEKMVCEFEDPYILITDKKINSMKQIVPVLEKVASEGRSLLIIAEDVDGDAQAALILNIIRGALRVCAVKAPGFGNERKEMLEDIAVLTGGQVISEDKGMKLEEFDDYMLGSARKVTIDNNKTIIVEGKGDKAKIKERVSLIEAQINIADVEYKKTELKKRQAKLGGGVAVIKVGAATETELKEKKMRIDDALNATKAAVEEGVVIGGGISLFRAAAILDSLKLEGDREIGVKIVQRAIEEPVRQIAENAGKEGAEVVATIRAEPRELFGYNAKKDVFEDLFEAGVIDPTKVVRSGLQNAASIAGMVLTTEALVTDFNDEKDEKAATIII.

ATP contacts are provided by residues 30 to 33, 86 to 90, Gly-414, and Asp-494; these read TLGP and DGTTT.

Belongs to the chaperonin (HSP60) family. As to quaternary structure, forms a cylinder of 14 subunits composed of two heptameric rings stacked back-to-back. Interacts with the co-chaperonin GroES.

The protein resides in the cytoplasm. The catalysed reaction is ATP + H2O + a folded polypeptide = ADP + phosphate + an unfolded polypeptide.. Its function is as follows. Together with its co-chaperonin GroES, plays an essential role in assisting protein folding. The GroEL-GroES system forms a nano-cage that allows encapsulation of the non-native substrate proteins and provides a physical environment optimized to promote and accelerate protein folding. The chain is Chaperonin GroEL from Methanosarcina barkeri (strain Fusaro / DSM 804).